We begin with the raw amino-acid sequence, 467 residues long: Cysteine--tRNA ligase (467 aa).

Cys29 is a Zn(2+) binding site. A 'HIGH' region motif is present at residues 31 to 41; sequence PTVYNYVHIGN. Zn(2+) contacts are provided by Cys209, His234, and Glu238. Positions 267–271 match the 'KMSKS' region motif; that stretch reads KMSKS. ATP is bound at residue Lys270.

It belongs to the class-I aminoacyl-tRNA synthetase family. Monomer. It depends on Zn(2+) as a cofactor.

It is found in the cytoplasm. It carries out the reaction tRNA(Cys) + L-cysteine + ATP = L-cysteinyl-tRNA(Cys) + AMP + diphosphate. The sequence is that of Cysteine--tRNA ligase from Xylella fastidiosa (strain Temecula1 / ATCC 700964).